The primary structure comprises 117 residues: RutC family protein HD_0322 (117 aa).

The protein belongs to the RutC family.

In Haemophilus ducreyi (strain 35000HP / ATCC 700724), this protein is RutC family protein HD_0322.